The primary structure comprises 378 residues: Alginate lyase (378 aa).

A signal peptide spans 1 to 28; it reads MQTPKLIRPTLLSMAILSSMAWATGASA. Residues 67 to 68, 140 to 141, and Tyr258 contribute to the substrate site; these read SK and HT. Positions 359–378 are disordered; it reads LTKVYDPSHEKGDKGDNDGS. A compositionally biased stretch (basic and acidic residues) spans 364–378; it reads DPSHEKGDKGDNDGS.

Belongs to the polysaccharide lyase 5 family.

The protein resides in the periplasm. It carries out the reaction Eliminative cleavage of alginate to give oligosaccharides with 4-deoxy-alpha-L-erythro-hex-4-enuronosyl groups at their non-reducing ends and beta-D-mannuronate at their reducing end.. Catalyzes the depolymerization of alginate by cleaving the beta-1,4 glycosidic bond between two adjacent sugar residues via a beta-elimination mechanism. May serve to degrade mislocalized alginate that is trapped in the periplasmic space. The chain is Alginate lyase from Pseudomonas syringae pv. syringae (strain B728a).